The sequence spans 290 residues: Pyridoxal kinase PdxY (290 aa).

Residues S12 and 47-48 (TQ) each bind substrate. Residues D114, E151, K184, and 211–214 (RPLL) each bind ATP. A substrate-binding site is contributed by D225.

The protein belongs to the pyridoxine kinase family. PdxY subfamily. As to quaternary structure, homodimer. Requires Mg(2+) as cofactor.

The catalysed reaction is pyridoxal + ATP = pyridoxal 5'-phosphate + ADP + H(+). It participates in cofactor metabolism; pyridoxal 5'-phosphate salvage; pyridoxal 5'-phosphate from pyridoxal: step 1/1. Pyridoxal kinase involved in the salvage pathway of pyridoxal 5'-phosphate (PLP). Catalyzes the phosphorylation of pyridoxal to PLP. This Pseudomonas fluorescens (strain ATCC BAA-477 / NRRL B-23932 / Pf-5) protein is Pyridoxal kinase PdxY.